Reading from the N-terminus, the 132-residue chain is Secreted RxLR effector protein BLR08 (132 aa).

Residues 1-22 (MRHKCLLAMAVVASMAFYSVIS) form the signal peptide. N-linked (GlcNAc...) asparagine glycosylation occurs at asparagine 25. A disordered region spans residues 36-57 (NRRLRPRVEPTANELDKQSDVD). The RxLR-dEER signature appears at 37–83 (RRLRPRVEPTANELDKQSDVDTKLEADRRLGYPGESGFMLEGELEER). A helical transmembrane segment spans residues 111–131 (FFLGLFASVIGVSIISACYGI).

The protein belongs to the RxLR effector family. In terms of assembly, interacts with host transcription factor NAC069.

The protein localises to the secreted. The protein resides in the host endoplasmic reticulum membrane. Its function is as follows. Secreted effector that inhibits stress-induced relocalization of the transcription factor NAC069 to the nucleus, thus affecting its broad role in abiotic and biotic stress responses. The protein is Secreted RxLR effector protein BLR08 of Bremia lactucae (Lettuce downy mildew).